The following is a 429-amino-acid chain: E3 ubiquitin-protein ligase ZNRF4 (429 aa).

The first 27 residues, 1–27 (MLRCRPEPLMPRATRVAVAVSLPLSHA), serve as a signal peptide directing secretion. At 28 to 250 (VIPTQLPSHP…PPCRDLDCHP (223 aa)) the chain is on the lumenal side. The tract at residues 30–64 (PTQLPSHPGHRPSGRPRRCPKAPCLPSPVGLSSTQ) is disordered. A compositionally biased stretch (basic residues) spans 37–49 (PGHRPSGRPRRCP). N-linked (GlcNAc...) asparagine glycosylation occurs at Asn152. Positions 152 to 223 (NRSLGAIALI…VGEAASQDLR (72 aa)) constitute a PA domain. The helical transmembrane segment at 251–271 (VLTVSWALGRTLALVVSTLFV) threads the bilayer. Topologically, residues 272 to 429 (LNRLWLWAQA…SPAPPEAPGQ (158 aa)) are cytoplasmic. Residues 309–352 (CAICLDEYEEGDQLKILPCSHTYHCKCIDPWFSQAPRRSCPVCK) form an RING-type; atypical zinc finger. Disordered regions lie at residues 358 to 381 (TEDS…GHRP) and 409 to 429 (TTSL…APGQ). A compositionally biased stretch (polar residues) spans 409-420 (TTSLEAEDTTVS).

As to quaternary structure, interacts with CANX.

It localises to the endoplasmic reticulum membrane. It carries out the reaction S-ubiquitinyl-[E2 ubiquitin-conjugating enzyme]-L-cysteine + [acceptor protein]-L-lysine = [E2 ubiquitin-conjugating enzyme]-L-cysteine + N(6)-ubiquitinyl-[acceptor protein]-L-lysine.. It functions in the pathway protein modification; protein ubiquitination. Functionally, E3 ubiquitin-protein ligase that acts as a negative regulator of NOD2 signaling by mediating ubiquitination and degradation of RIPK2. Also catalyzes ubiquitination and proteasomal degradation of CANX within the endoplasmic reticulum. Could have a role in spermatogenesis. The protein is E3 ubiquitin-protein ligase ZNRF4 (ZNRF4) of Macaca fascicularis (Crab-eating macaque).